We begin with the raw amino-acid sequence, 153 residues long: Ribosomal RNA large subunit methyltransferase H (153 aa).

S-adenosyl-L-methionine-binding positions include L75, G102, and 121 to 126 (LSKLTL).

Belongs to the RNA methyltransferase RlmH family. As to quaternary structure, homodimer.

Its subcellular location is the cytoplasm. The catalysed reaction is pseudouridine(1915) in 23S rRNA + S-adenosyl-L-methionine = N(3)-methylpseudouridine(1915) in 23S rRNA + S-adenosyl-L-homocysteine + H(+). Specifically methylates the pseudouridine at position 1915 (m3Psi1915) in 23S rRNA. This Campylobacter jejuni (strain RM1221) protein is Ribosomal RNA large subunit methyltransferase H.